A 267-amino-acid polypeptide reads, in one-letter code: Small ribosomal subunit protein eS4 (267 aa).

The S4 RNA-binding domain maps to 42–104 (LPLILVLRNR…TKENFRLLFD (63 aa)).

This sequence belongs to the eukaryotic ribosomal protein eS4 family.

The protein localises to the cytoplasm. In Dictyostelium discoideum (Social amoeba), this protein is Small ribosomal subunit protein eS4 (rps4).